The following is a 182-amino-acid chain: R-phycoerythrin subunit beta (182 aa).

A (2R,3E)-phycoerythrobilin-binding site is contributed by C82.

It belongs to the phycobiliprotein family. In terms of assembly, homodimer. Contains one covalently linked phycoerythrobilin chromophore.

In terms of biological role, green-light absorbing phycoerythrin of unknown function. The polypeptide is R-phycoerythrin subunit beta (cpeB) (Prochlorococcus marinus (strain SARG / CCMP1375 / SS120)).